Consider the following 83-residue polypeptide: Small ribosomal subunit protein eS21 (83 aa).

This sequence belongs to the eukaryotic ribosomal protein eS21 family. Component of the 40S small ribosomal subunit.

Its subcellular location is the cytoplasm. The protein resides in the cytosol. The protein localises to the rough endoplasmic reticulum. This chain is Small ribosomal subunit protein eS21 (RpS21), found in Biphyllus lunatus (Beetle).